The sequence spans 407 residues: Protein NIS1 (407 aa).

A compositionally biased stretch (low complexity) spans 41–61; it reads SNSNSNSNTNSNTNSNTNSNS. A disordered region spans residues 41–64; it reads SNSNSNSNTNSNTNSNTNSNSDTK. Residues S260, S264, S300, and S302 each carry the phosphoserine modification. Over residues 277–302 the composition is skewed to polar residues; the sequence is IKQNSTTPTTRSVYNKNVGRSNTSPS. Residues 277–315 are disordered; sequence IKQNSTTPTTRSVYNKNVGRSNTSPSVLYHPKRRGKLNT. Positions 306–315 are enriched in basic residues; that stretch reads HPKRRGKLNT. The SUMO-binding motif lies at 391 to 398; sequence IIIPDSQD.

Interacts with CBF2, GIS1, NAP1, PRM8, REI1, SHS1 and SMT3.

The protein localises to the bud neck. It localises to the cytoplasm. The protein resides in the cell cortex. May be involved in a mitotic signaling network. Binds sumoylated proteins and may stabilize SUMO chains. The polypeptide is Protein NIS1 (NIS1) (Saccharomyces cerevisiae (strain ATCC 204508 / S288c) (Baker's yeast)).